Here is a 157-residue protein sequence, read N- to C-terminus: UPF0756 membrane protein ABC2716 (157 aa).

4 helical membrane passes run 8–28 (FLLLLMAIALIAKNQSLIIAI), 54–74 (LGVTIITIAVLVPIATGDIGF), 84–104 (LYAWVALGSGIAVALVAASGI), and 117–137 (LVLGTIVAVSFLNGVAVGPLI).

The protein belongs to the UPF0756 family.

The protein resides in the cell membrane. This is UPF0756 membrane protein ABC2716 from Shouchella clausii (strain KSM-K16) (Alkalihalobacillus clausii).